Reading from the N-terminus, the 222-residue chain is Adenylate kinase (222 aa).

16 to 21 (GAGKGT) contacts ATP. The NMP stretch occupies residues 36 to 65 (ATGDMLRSQISKGTELGLQAKKIMDQGGLV). Residues threonine 37, arginine 42, 63–65 (GLV), 92–95 (GFPR), and glutamine 99 each bind AMP. The interval 133 to 170 (GRLIHPASGRSYHKLFNPPKEDMKDDVTGEPLVQRSDD) is LID. ATP is bound by residues arginine 134 and 143-144 (SY). AMP-binding residues include arginine 167 and arginine 178. Position 206 (glutamine 206) interacts with ATP.

This sequence belongs to the adenylate kinase family. AK2 subfamily. As to quaternary structure, monomer.

The protein localises to the cytoplasm. Its subcellular location is the cytosol. The protein resides in the mitochondrion intermembrane space. The catalysed reaction is AMP + ATP = 2 ADP. Its function is as follows. Catalyzes the reversible transfer of the terminal phosphate group between ATP and AMP. Plays an important role in cellular energy homeostasis and in adenine nucleotide metabolism. Adenylate kinase activity is critical for regulation of the phosphate utilization and the AMP de novo biosynthesis pathways. In Candida glabrata (strain ATCC 2001 / BCRC 20586 / JCM 3761 / NBRC 0622 / NRRL Y-65 / CBS 138) (Yeast), this protein is Adenylate kinase.